A 333-amino-acid polypeptide reads, in one-letter code: MLCRLGGRWLRPLPALQLWARDLPLAPVPTSGAKRPTLPVWAVAPVSAVHANGWYEALAASSPVRVAEEVLLGVHAATGLPWWGSILLSTVALRGAVTLPLAAYQHYILAKVENLQPEIKTIARHLNQEVAVRANQLGWSKRDARLTYLKNMRRLISELYVRDNCHPFKATVLVWIQLPMWIFMSFALRNLSTGAAHSEGFSVQEQLATGGILWFPDLTAPDSTWILPISVGVINLLIVEICALQKIGMSRFQTYITYFVRAMSVLMIPIAATVPSSIVLYWLCSSFVGLSQNLLLRSPGFRQLCRIPSTKSDSETPYKDIFAAFNTKFISRK.

The helical transmembrane segment at 168–188 threads the bilayer; sequence FKATVLVWIQLPMWIFMSFAL. At 189–223 the chain is on the mitochondrial matrix side; that stretch reads RNLSTGAAHSEGFSVQEQLATGGILWFPDLTAPDS. A helical transmembrane segment spans residues 224-244; it reads TWILPISVGVINLLIVEICAL. Residues 245-262 lie on the Mitochondrial intermembrane side of the membrane; sequence QKIGMSRFQTYITYFVRA. A helical membrane pass occupies residues 263 to 283; the sequence is MSVLMIPIAATVPSSIVLYWL. Residues 284-333 are Mitochondrial matrix-facing; sequence CSSFVGLSQNLLLRSPGFRQLCRIPSTKSDSETPYKDIFAAFNTKFISRK.

This sequence belongs to the OXA1/ALB3/YidC family. As to quaternary structure, found in a complex with TMEM177, COA6, MT-CO2/COX2, COX20, SCO1 and SCO2. Interacts transiently with MT-CO2/COX2 during its maturation. Interacts with COX20 in a MT-CO2/COX2-dependent manner.

It localises to the mitochondrion inner membrane. In terms of biological role, mitochondrial membrane insertase required for the translocation of the C-terminus of cytochrome c oxidase subunit II (MT-CO2/COX2) across the mitochondrial inner membrane. Plays a role in MT-CO2/COX2 maturation following the COX20-mediated stabilization of newly synthesized MT-CO2/COX2 protein and before the action of the metallochaperones SCO1/2. Essential for the assembly and stability of the mitochondrial respiratory chain complex IV (also known as cytochrome c oxidase). The polypeptide is Cytochrome c oxidase assembly protein COX18, mitochondrial (COX18) (Homo sapiens (Human)).